Reading from the N-terminus, the 159-residue chain is Allergen Arg r 1 (159 aa).

The signal sequence occupies residues 1–16 (MALIILLVACLSVVSA). Cystine bridges form between C50–C155 and C109–C134.

Belongs to the calycin superfamily. Histamine-binding salivary protein family. In terms of processing, not glycosylated.

The protein localises to the secreted. The sequence is that of Allergen Arg r 1 from Argas reflexus (European pigeon tick).